Reading from the N-terminus, the 122-residue chain is Large ribosomal subunit protein uL14 (122 aa).

This sequence belongs to the universal ribosomal protein uL14 family. Part of the 50S ribosomal subunit. Forms a cluster with proteins L3 and L19. In the 70S ribosome, L14 and L19 interact and together make contacts with the 16S rRNA in bridges B5 and B8.

Functionally, binds to 23S rRNA. Forms part of two intersubunit bridges in the 70S ribosome. This Xylella fastidiosa (strain 9a5c) protein is Large ribosomal subunit protein uL14.